The sequence spans 1212 residues: Histone demethylase UTY (1212 aa).

8 TPR repeats span residues 88 to 121 (SDFFCQLGHFNLLLEDYSKALSSYQRYYSLQTDY), 125 to 158 (AAFLYGLGLVYFYYNAFQWAIRAFQEVLYVDPNF), 165 to 193 (HLRLGFMFKMNTDYESSLKHFQLALIDCN), 200 to 233 (VEIQFHIAHLYETQRKYHSAKAAYEQLLQIESLP), 245 to 278 (GWMHHNMDLIGDNTTKERYAIQYLQKSLEEDPNS), 279 to 312 (GQSWYFLGRCYSCIGKVQDAFVSYRQSIDKSEAS), 313 to 346 (ADTWCSIGVLYQQQNQPMDALQAYICAVQLDHGH), and 347 to 380 (AAAWMDLGILYESCNQPQDAIKCYLNAARSKSCN). Basic and acidic residues predominate over residues 530-539 (FTKESKDSRS). The interval 530 to 555 (FTKESKDSRSKSLTSKTSRKDRDTSN) is disordered. The residue at position 752 (T752) is a Phosphothreonine. The disordered stretch occupies residues 865–886 (RRTQVKDYSDNESTCSDNSGRR). One can recognise a JmjC domain in the interval 907-1070 (KWKLQLHELT…YKLAVERYEW (164 aa)). The Fe cation site is built by H958, E960, and H1038. Positions 1143, 1146, 1170, and 1173 each coordinate Zn(2+).

Belongs to the UTX family. As to quaternary structure, binds TLE1 and TLE2. Requires L-ascorbate as cofactor. Fe(2+) is required as a cofactor.

It is found in the nucleus. The enzyme catalyses N(6),N(6),N(6)-trimethyl-L-lysyl(27)-[histone H3] + 2 2-oxoglutarate + 2 O2 = N(6)-methyl-L-lysyl(27)-[histone H3] + 2 formaldehyde + 2 succinate + 2 CO2. Male-specific histone demethylase that catalyzes trimethylated 'Lys-27' (H3K27me3) demethylation in histone H3. Has relatively low KDM activity. In Mus musculus (Mouse), this protein is Histone demethylase UTY (Uty).